A 981-amino-acid polypeptide reads, in one-letter code: Colossin-C (981 aa).

An N-terminal signal peptide occupies residues 1–23 (MKILYSLLLISSIILNTVLNISS). The N-linked (GlcNAc...) asparagine glycan is linked to asparagine 63. Positions 172-195 (EQTQPPTQPPTQPPTQPPTPPPFT) are disordered. The span at 177 to 194 (PTQPPTQPPTQPPTPPPF) shows a compositional bias: pro residues. Asparagine 222, asparagine 591, and asparagine 811 each carry an N-linked (GlcNAc...) asparagine glycan.

The protein belongs to the serine-aspartate repeat-containing protein (SDr) family.

Its subcellular location is the secreted. This chain is Colossin-C (colC), found in Dictyostelium discoideum (Social amoeba).